The following is a 443-amino-acid chain: Xaa-Pro dipeptidase (443 aa).

The Mn(2+) site is built by aspartate 246, aspartate 257, histidine 339, glutamate 384, and glutamate 423.

It belongs to the peptidase M24B family. Bacterial-type prolidase subfamily. Requires Mn(2+) as cofactor.

The catalysed reaction is Xaa-L-Pro dipeptide + H2O = an L-alpha-amino acid + L-proline. Functionally, splits dipeptides with a prolyl residue in the C-terminal position. This chain is Xaa-Pro dipeptidase, found in Klebsiella pneumoniae subsp. pneumoniae (strain ATCC 700721 / MGH 78578).